We begin with the raw amino-acid sequence, 601 residues long: Aspartate--tRNA(Asp/Asn) ligase (601 aa).

L-aspartate is bound at residue glutamate 187. The interval 211–214 (QQFK) is aspartate. Positions 233 and 461 each coordinate L-aspartate. ATP is bound at residue 233–235 (RDE). Glutamate 495 serves as a coordination point for ATP. Arginine 502 provides a ligand contact to L-aspartate. An ATP-binding site is contributed by 547-550 (GLDR).

Belongs to the class-II aminoacyl-tRNA synthetase family. Type 1 subfamily. In terms of assembly, homodimer.

It is found in the cytoplasm. The catalysed reaction is tRNA(Asx) + L-aspartate + ATP = L-aspartyl-tRNA(Asx) + AMP + diphosphate. In terms of biological role, aspartyl-tRNA synthetase with relaxed tRNA specificity since it is able to aspartylate not only its cognate tRNA(Asp) but also tRNA(Asn). Reaction proceeds in two steps: L-aspartate is first activated by ATP to form Asp-AMP and then transferred to the acceptor end of tRNA(Asp/Asn). In Pelodictyon phaeoclathratiforme (strain DSM 5477 / BU-1), this protein is Aspartate--tRNA(Asp/Asn) ligase.